A 551-amino-acid polypeptide reads, in one-letter code: Probable NADH-ubiquinone oxidoreductase C947.15c, mitochondrial (551 aa).

The N-terminal 35 residues, 1–35 (MSVSKARLQSVVRLSRTVPYSKTMVRSFHVSCAVK), are a transit peptide targeting the mitochondrion. Position 92 to 122 (92 to 122 (NIVVLGSGWGAVAAIKNLDPSLYNITLVSPR)) interacts with FAD. Position 255–291 (255–291 (LHITVVGGGPTGMEFAAEMQDFIDNDVKDMFPELQKD)) interacts with NAD(+).

This sequence belongs to the NADH dehydrogenase family.

Its subcellular location is the mitochondrion. The catalysed reaction is a quinone + NADH + H(+) = a quinol + NAD(+). It carries out the reaction a ubiquinone + NADH + H(+) = a ubiquinol + NAD(+). Its function is as follows. Catalyzes the oxidation of NADH. The sequence is that of Probable NADH-ubiquinone oxidoreductase C947.15c, mitochondrial from Schizosaccharomyces pombe (strain 972 / ATCC 24843) (Fission yeast).